Here is a 302-residue protein sequence, read N- to C-terminus: Putative S-adenosyl-L-methionine-dependent methyltransferase MRA_0290 (302 aa).

Residues D126 and 155 to 156 (DL) contribute to the S-adenosyl-L-methionine site.

Belongs to the UPF0677 family.

Exhibits S-adenosyl-L-methionine-dependent methyltransferase activity. This Mycobacterium tuberculosis (strain ATCC 25177 / H37Ra) protein is Putative S-adenosyl-L-methionine-dependent methyltransferase MRA_0290.